Reading from the N-terminus, the 193-residue chain is Rho-related protein racF2 (193 aa).

Gly10–Thr17 is a binding site for GTP. An Effector region motif is present at residues Tyr32–Tyr40. Residues Asp57–Gln61 and Thr115–Asp118 each bind GTP. Cys190 is modified (cysteine methyl ester). Cys190 carries the S-geranylgeranyl cysteine lipid modification. Residues Thr191–Met193 constitute a propeptide, removed in mature form.

It belongs to the small GTPase superfamily. Rho family.

The protein resides in the cell membrane. The chain is Rho-related protein racF2 (racF2) from Dictyostelium discoideum (Social amoeba).